Consider the following 509-residue polypeptide: Maturase K (509 aa).

Belongs to the intron maturase 2 family. MatK subfamily.

It localises to the plastid. It is found in the chloroplast. Usually encoded in the trnK tRNA gene intron. Probably assists in splicing its own and other chloroplast group II introns. This chain is Maturase K, found in Nymphaea odorata (White water lily).